A 615-amino-acid chain; its full sequence is Sodium-dependent dopamine transporter (615 aa).

Positions Met-1–Ala-39 are disordered. Over Met-1–Lys-46 the chain is Cytoplasmic. Polar residues predominate over residues Arg-15–Thr-24. The helical transmembrane segment at Leu-47–Lys-72 threads the bilayer. Na(+) contacts are provided by Gly-55, Ala-57, Val-58, and Asn-62. Topologically, residues Asn-73–Gly-76 are extracellular. Residues Val-77–Leu-100 form a helical membrane-spanning segment. The Cytoplasmic portion of the chain corresponds to Gly-101–Lys-120. Residues Gly-121–Ser-151 traverse the membrane as a helical segment. Topologically, residues Phe-152–Val-229 are extracellular. Cys-161 and Cys-170 are joined by a disulfide. N-linked (GlcNAc...) asparagine glycans are attached at residues Asn-162 and Asn-187. Residues Arg-230–Lys-250 traverse the membrane as a helical segment. The Cytoplasmic portion of the chain corresponds to Gly-251–His-253. A helical transmembrane segment spans residues Thr-254 to Val-278. At Thr-279 to Ser-302 the chain is on the extracellular side. A helical membrane pass occupies residues Val-303–Tyr-328. Residue Ser-314 coordinates Na(+). The Cytoplasmic portion of the chain corresponds to Asn-329–Asn-334. A helical transmembrane segment spans residues Val-335–Phe-358. Residue Asn-346 coordinates Na(+). Residues Ser-359–Pro-398 lie on the Extracellular side of the membrane. Residues Phe-399 to Ile-424 traverse the membrane as a helical segment. The Na(+) site is built by Leu-411, Asp-414, and Ser-415. Residues Thr-425–Glu-439 are Cytoplasmic-facing. A helical membrane pass occupies residues Val-440–Gly-460. A topological domain (extracellular) is located at residue Gly-461. A helical membrane pass occupies residues Ile-462–Ile-488. The Cytoplasmic segment spans residues Ala-489–Ser-518. A helical transmembrane segment spans residues Cys-519 to Tyr-541. At Gln-542–Tyr-544 the chain is on the extracellular side. Residues Thr-545 to Ile-565 traverse the membrane as a helical segment. Over Pro-566 to Leu-615 the chain is Cytoplasmic.

It belongs to the sodium:neurotransmitter symporter (SNF) (TC 2.A.22) family.

It localises to the cell membrane. Its function is as follows. Dopamine transporter. Terminates the action of dopamine by its high affinity sodium-dependent reuptake into presynaptic terminals. Plays a role in the learned avoidance behavior of animals exposed to food that induces mitochondrial stress. The polypeptide is Sodium-dependent dopamine transporter (Caenorhabditis elegans).